Reading from the N-terminus, the 458-residue chain is tRNA modification GTPase MnmE (458 aa).

The (6S)-5-formyl-5,6,7,8-tetrahydrofolate site is built by Arg26, Glu88, and Arg127. Positions Gly224–Phe378 constitute a TrmE-type G domain. Asn234 contributes to the K(+) binding site. Residues Asn234–Ser239, Thr253–Thr259, and Asp278–Gly281 contribute to the GTP site. Ser238 lines the Mg(2+) pocket. K(+) contacts are provided by Thr253, Ile255, and Thr258. A Mg(2+)-binding site is contributed by Thr259. Residue Lys458 participates in (6S)-5-formyl-5,6,7,8-tetrahydrofolate binding.

It belongs to the TRAFAC class TrmE-Era-EngA-EngB-Septin-like GTPase superfamily. TrmE GTPase family. As to quaternary structure, homodimer. Heterotetramer of two MnmE and two MnmG subunits. Requires K(+) as cofactor.

It localises to the cytoplasm. Functionally, exhibits a very high intrinsic GTPase hydrolysis rate. Involved in the addition of a carboxymethylaminomethyl (cmnm) group at the wobble position (U34) of certain tRNAs, forming tRNA-cmnm(5)s(2)U34. This is tRNA modification GTPase MnmE from Streptococcus agalactiae serotype Ia (strain ATCC 27591 / A909 / CDC SS700).